The chain runs to 637 residues: 1-deoxy-D-xylulose-5-phosphate synthase (637 aa).

Thiamine diphosphate contacts are provided by residues histidine 82 and 123–125 (GHA). Residue aspartate 154 participates in Mg(2+) binding. Thiamine diphosphate is bound by residues 155–156 (GS), asparagine 183, tyrosine 295, and glutamate 378. Asparagine 183 contributes to the Mg(2+) binding site.

This sequence belongs to the transketolase family. DXPS subfamily. As to quaternary structure, homodimer. It depends on Mg(2+) as a cofactor. Thiamine diphosphate is required as a cofactor.

It catalyses the reaction D-glyceraldehyde 3-phosphate + pyruvate + H(+) = 1-deoxy-D-xylulose 5-phosphate + CO2. The protein operates within metabolic intermediate biosynthesis; 1-deoxy-D-xylulose 5-phosphate biosynthesis; 1-deoxy-D-xylulose 5-phosphate from D-glyceraldehyde 3-phosphate and pyruvate: step 1/1. Functionally, catalyzes the acyloin condensation reaction between C atoms 2 and 3 of pyruvate and glyceraldehyde 3-phosphate to yield 1-deoxy-D-xylulose-5-phosphate (DXP). This Lawsonia intracellularis (strain PHE/MN1-00) protein is 1-deoxy-D-xylulose-5-phosphate synthase.